A 695-amino-acid polypeptide reads, in one-letter code: DNA ligase (695 aa).

NAD(+)-binding positions include 44–48 (DAEYD), 93–94 (SL), and glutamate 124. Catalysis depends on lysine 126, which acts as the N6-AMP-lysine intermediate. The NAD(+) site is built by arginine 147, glutamate 187, lysine 304, and lysine 328. 4 residues coordinate Zn(2+): cysteine 422, cysteine 425, cysteine 440, and cysteine 445. The 90-residue stretch at 606–695 (TVQGPLAGKT…GIEVEAAARS (90 aa)) folds into the BRCT domain.

It belongs to the NAD-dependent DNA ligase family. LigA subfamily. Mg(2+) serves as cofactor. Mn(2+) is required as a cofactor.

The enzyme catalyses NAD(+) + (deoxyribonucleotide)n-3'-hydroxyl + 5'-phospho-(deoxyribonucleotide)m = (deoxyribonucleotide)n+m + AMP + beta-nicotinamide D-nucleotide.. Functionally, DNA ligase that catalyzes the formation of phosphodiester linkages between 5'-phosphoryl and 3'-hydroxyl groups in double-stranded DNA using NAD as a coenzyme and as the energy source for the reaction. It is essential for DNA replication and repair of damaged DNA. The protein is DNA ligase of Thermomicrobium roseum (strain ATCC 27502 / DSM 5159 / P-2).